Reading from the N-terminus, the 428-residue chain is MSYLIKNGWILNENGEKTQADIRVTGETITAIGKLDATDNETVIDAKGLLVSPGFVDLHVHFREPGGEKKETIETGAKAAARGGYTTVAAMPNTRPVPDTKEQMEWVQNRIKETSCVRVLPYASITIRQIGDEMTNFEALKEAGAFAFTDDGVGIQTAGMMYEAMKRAAAIDKAIVAHCEDNSLIYGGSVHEGTFSKANGLNGIPSVCESVHIARDVLLAEAANCHYHVCHISTKESVRVVRDAKKAGIRVTAEVSPHHLLLCDEDIPGLDTNYKMNPPLRSPEDRAALIEGLLDGTIDFIATDHAPHTEEEKNTEMKLAPFGIVGLETAFPLLYTHFVKNGSWSLKQLIDYMTIKPCEAFGLPYGTLQTGQAADITLIDLEKEAVIDKETFLSKGKNTPFNGISCTGWPVATIAAGKLAYEEGRLVK.

Zn(2+) contacts are provided by His-59 and His-61. Substrate contacts are provided by residues 61–63 and Asn-93; that span reads HFR. Zn(2+) contacts are provided by Asp-151, His-178, and His-231. Residue Asn-277 coordinates substrate. Position 304 (Asp-304) interacts with Zn(2+). Residue Asp-304 is part of the active site. Substrate contacts are provided by residues His-308 and 322-323; that span reads FG.

The protein belongs to the metallo-dependent hydrolases superfamily. DHOase family. Class I DHOase subfamily. As to quaternary structure, homodimer. Requires Zn(2+) as cofactor.

The catalysed reaction is (S)-dihydroorotate + H2O = N-carbamoyl-L-aspartate + H(+). Its pathway is pyrimidine metabolism; UMP biosynthesis via de novo pathway; (S)-dihydroorotate from bicarbonate: step 3/3. Functionally, catalyzes the reversible cyclization of carbamoyl aspartate to dihydroorotate. The polypeptide is Dihydroorotase (Bacillus subtilis (strain 168)).